The following is a 753-amino-acid chain: 5-methyltetrahydropteroyltriglutamate--homocysteine methyltransferase (753 aa).

5-methyltetrahydropteroyltri-L-glutamate is bound by residues 17-20 and lysine 117; that span reads RELK. Residues 431–433 and glutamate 484 each bind L-homocysteine; that span reads IGS. L-methionine-binding positions include 431-433 and glutamate 484; that span reads IGS. Residues 515–516 and tryptophan 561 contribute to the 5-methyltetrahydropteroyltri-L-glutamate site; that span reads RC. An L-homocysteine-binding site is contributed by aspartate 599. Aspartate 599 contributes to the L-methionine binding site. Glutamate 605 is a 5-methyltetrahydropteroyltri-L-glutamate binding site. Zn(2+) contacts are provided by histidine 641, cysteine 643, and glutamate 665. Histidine 694 acts as the Proton donor in catalysis. Cysteine 726 is a binding site for Zn(2+).

This sequence belongs to the vitamin-B12 independent methionine synthase family. The cofactor is Zn(2+).

The catalysed reaction is 5-methyltetrahydropteroyltri-L-glutamate + L-homocysteine = tetrahydropteroyltri-L-glutamate + L-methionine. It participates in amino-acid biosynthesis; L-methionine biosynthesis via de novo pathway; L-methionine from L-homocysteine (MetE route): step 1/1. Functionally, catalyzes the transfer of a methyl group from 5-methyltetrahydrofolate to homocysteine resulting in methionine formation. The chain is 5-methyltetrahydropteroyltriglutamate--homocysteine methyltransferase from Citrobacter koseri (strain ATCC BAA-895 / CDC 4225-83 / SGSC4696).